The chain runs to 560 residues: Poly(3-hydroxyalkanoate) polymerase 2 (560 aa).

C296 is an active-site residue.

Belongs to the PHA/PHB synthase family. Type II PhaC subfamily.

The protein operates within biopolymer metabolism; poly-(R)-3-hydroxybutanoate biosynthesis. Synthesizes poly(3-hydroxyalkanoates) (PHA), complements a mutant of P.putida that does not make PHA. This chain is Poly(3-hydroxyalkanoate) polymerase 2, found in Ectopseudomonas oleovorans (Pseudomonas oleovorans).